The sequence spans 1367 residues: Phospholipid-transporting ATPase C4F10.16c (1367 aa).

The Cytoplasmic portion of the chain corresponds to 1–154 (MPSLINFDAI…PKNLWNQFKN (154 aa)). The tract at residues 34–104 (HNGSLAHEGP…KKNEAGTESG (71 aa)) is disordered. Basic and acidic residues predominate over residues 50 to 70 (SSRHHESQFSQEAHAEQRSRD). The segment covering 77–92 (FEGSCNNSDQSWTSRV) has biased composition (polar residues). A helical transmembrane segment spans residues 155-172 (IANAFFLFVTLLQCIPLF). The Lumenal segment spans residues 173–177 (CPEHL). Residues 178–197 (GLSFIPLSVILLTTAIKDGI) form a helical membrane-spanning segment. The Cytoplasmic segment spans residues 198 to 482 (EDYRRCVLDK…PSKRSRITRD (285 aa)). A helical membrane pass occupies residues 483–503 (LNWTIILNFLLLFAMCLFSGV). The Lumenal portion of the chain corresponds to 504-531 (LRSIYSAQNNSARVFELSKNSNTAPAHG). The chain crosses the membrane as a helical span at residues 532 to 552 (IISIFTSLILFQNLVPISLYI). The Cytoplasmic portion of the chain corresponds to 553-1091 (TMDIVRSIQS…GRWDYKRMSQ (539 aa)). The active-site 4-aspartylphosphate intermediate is aspartate 600. ATP contacts are provided by aspartate 600, lysine 601, threonine 602, glutamate 724, phenylalanine 765, serine 767, lysine 770, lysine 788, arginine 822, threonine 823, threonine 902, glycine 903, aspartate 904, arginine 1009, and lysine 1015. Residue aspartate 600 participates in Mg(2+) binding. Threonine 602 lines the Mg(2+) pocket. Aspartate 1035 contributes to the Mg(2+) binding site. Residues asparagine 1038 and aspartate 1039 each contribute to the ATP site. Aspartate 1039 contacts Mg(2+). Residues 1092–1112 (MISFFFYKNVIWTFILFWYQF) form a helical membrane-spanning segment. At 1113–1124 (YNEFDGNYIFDY) the chain is on the lumenal side. Residues 1125 to 1145 (TYVMLFNLLFTSLPVIIAGCF) traverse the membrane as a helical segment. Topologically, residues 1146–1174 (DQDVDASVSMKNPSLYQRGILGLEWNGKR) are cytoplasmic. Residues 1175 to 1197 (FWSYMLDGIYQSLVCFGVALFVF) traverse the membrane as a helical segment. Over 1198 to 1212 (KFGDFVSWTGRNIEC) the chain is Lumenal. A helical transmembrane segment spans residues 1213–1233 (IEDIGLFISSPTIFVINIFIL). Residues 1234–1240 (MNQERLN) lie on the Cytoplasmic side of the membrane. The chain crosses the membrane as a helical span at residues 1241–1261 (LISLITWMFSIGVFWIWTFIY). Over 1262-1276 (SEVGPSYAFHKSASR) the chain is Lumenal. The helical transmembrane segment at 1277–1297 (TCQTFGFWCVTVLTIALCLLP) threads the bilayer. A 1,2-diacyl-sn-glycero-3-phospho-L-serine is bound at residue arginine 1298. At 1298-1367 (RFSYICLQKL…TSVSFDDSNK (70 aa)) the chain is on the cytoplasmic side.

It belongs to the cation transport ATPase (P-type) (TC 3.A.3) family. Type IV subfamily. Mg(2+) is required as a cofactor.

It localises to the cell membrane. It is found in the endoplasmic reticulum membrane. The catalysed reaction is ATP + H2O + phospholipidSide 1 = ADP + phosphate + phospholipidSide 2.. It carries out the reaction a 1,2-diacyl-sn-glycero-3-phosphoethanolamine(out) + ATP + H2O = a 1,2-diacyl-sn-glycero-3-phosphoethanolamine(in) + ADP + phosphate + H(+). It catalyses the reaction a 1,2-diacyl-sn-glycero-3-phosphocholine(out) + ATP + H2O = a 1,2-diacyl-sn-glycero-3-phosphocholine(in) + ADP + phosphate + H(+). The enzyme catalyses a beta-D-glucosyl-(1&lt;-&gt;1')-N-acylsphing-4-enine(out) + ATP + H2O = a beta-D-glucosyl-(1&lt;-&gt;1')-N-acylsphing-4-enine(in) + ADP + phosphate + H(+). The catalysed reaction is a 1,2-diacyl-sn-glycero-3-phospho-L-serine(out) + ATP + H2O = a 1,2-diacyl-sn-glycero-3-phospho-L-serine(in) + ADP + phosphate + H(+). Catalytic component of a P4-ATPase flippase complex which catalyzes the hydrolysis of ATP coupled to the transport of glucosylceramide, phosphatidylcholine, phosphatidylethanolamine, and small amounts of phosphatidylserine from the lumenal to the cytosolic leaflet of the cell membrane and ensures the maintenance of asymmetric distribution of phospholipids. This chain is Phospholipid-transporting ATPase C4F10.16c, found in Schizosaccharomyces pombe (strain 972 / ATCC 24843) (Fission yeast).